We begin with the raw amino-acid sequence, 676 residues long: MEGLSLLQLPRDKFRKSSFFVWVIILFQKAFSMPLGVVTNSTLEVTEIDQLVCKDHLASTDQLKSVGLNLEGSGVSTDIPSATKRWGFRSGVPPQVVSYEAGEWAENCYNLEIKKPDGSECLPPPPDGVRGFPRCRYVHKAQGTGPCPGDYAFHKDGAFFLYDRLASTVIYRGVNFAEGVIAFLILAKPKETFLQSPPIREAANYTENTSSYYATSYLEYEIENFGAQHSTTLFKINNNTFVLLDRPHTPQFLFQLNDTIQLHQQLSNTTGKLIWTLDANINADIGEWAFWENKKNLSEQLRGEELSFETLSLNETEDDDATSSRTTKGRISDRATRKYSDLVPKDSPGMVSLHVPEGETTLPSQNSTEGRRVDVNTQETITETTATIIGTNGNNMQISTIGTGLSSSQILSSSPTMAPSPETQTSTTYTPKLPVMTTEESTTPPRNSPGSTTEAPTLTTPENITTAVKTVWPQESTSNGLITSTVTGILGSLGLRKRSRRQVNTRATGKCNPNLHYWTAQEQHNAAGIAWIPYFGPGAEGIYTEGLMHNQNALVCGLRQLANETTQALQLFLRATTELRTYTILNRKAIDFLLRRWGGTCRILGPDCCIEPHDWTKNITDKINQIIHDFIDNPLPNQDNDDNWWTGWRQWIPAGIGITGIIIAIIALLCVCKLLC.

The N-terminal stretch at 1 to 32 (MEGLSLLQLPRDKFRKSSFFVWVIILFQKAFS) is a signal peptide. Over 33-650 (MPLGVVTNST…DDNWWTGWRQ (618 aa)) the chain is Extracellular. N40 carries an N-linked (GlcNAc...) asparagine; by host glycan. 5 disulfides stabilise this stretch: C53/C609, C108/C135, C121/C147, C511/C556, and C601/C608. Residues 54-201 (KDHLASTDQL…TFLQSPPIRE (148 aa)) form a receptor-binding region. N-linked (GlcNAc...) asparagine; by host glycans are attached at residues N204, N208, N238, N257, N268, N296, and N314. The tract at residues 305–485 (ELSFETLSLN…STSNGLITST (181 aa)) is mucin-like region. A disordered region spans residues 313 to 351 (LNETEDDDATSSRTTKGRISDRATRKYSDLVPKDSPGMV). Residues 330-344 (RISDRATRKYSDLVP) show a composition bias toward basic and acidic residues. A glycan (N-linked (GlcNAc...) asparagine; by host) is linked at N366. Positions 406–458 (SSSQILSSSPTMAPSPETQTSTTYTPKLPVMTTEESTTPPRNSPGSTTEAPTL) are disordered. Polar residues-rich tracts occupy residues 415–430 (PTMAPSPETQTSTTYT) and 438–458 (TEESTTPPRNSPGSTTEAPTL). N463 is a glycosylation site (N-linked (GlcNAc...) asparagine; by host). The segment at 524–539 (HNAAGIAWIPYFGPGA) is fusion peptide. Residues 554–595 (LVCGLRQLANETTQALQLFLRATTELRTYTILNRKAIDFLLR) are a coiled coil. The N-linked (GlcNAc...) asparagine; by host glycan is linked to N563. Residues 615–634 (WTKNITDKINQIIHDFIDNP) adopt a coiled-coil conformation. A glycan (N-linked (GlcNAc...) asparagine; by host) is linked at N618. Residues 651–671 (WIPAGIGITGIIIAIIALLCV) form a helical membrane-spanning segment. Residues C670 and C672 are each lipidated (S-palmitoyl cysteine; by host). Residues 672–676 (CKLLC) are Cytoplasmic-facing.

This sequence belongs to the filoviruses glycoprotein family. In terms of assembly, homotrimer; each monomer consists of a GP1 and a GP2 subunit linked by disulfide bonds. The resulting peplomers (GP1,2) protrude from the virus surface as spikes. Interacts with host integrin alpha-V/ITGAV. Interacts with host CLEC10A. Binds also to host CD209 and CLEC4M/DC-SIGN(R). Interacts with host FOLR1. Interacts with BST2; this interaction inhibits the antiviral effect of BST2 and this allows viral release from infected cells. Interacts with host FCN1; this interaction enhances viral entry. Interacts with host TLR4; this interaction induces cell death in T-lymphocytes or proinflammatory cytokines and SOCS1 production in monocytes. As to quaternary structure, interacts with host entry receptor NPC1. GP1 and GP2delta are part of GP1,2delta soluble complexes released by ectodomain shedding. In terms of processing, the signal peptide region modulates GP's high mannose glycosylation, thereby determining the efficiency of the interactions with DC-SIGN(R). Post-translationally, N-glycosylated. O-glycosylated in the mucin-like region. In terms of processing, palmitoylation of GP2 is not required for its function. Post-translationally, specific enzymatic cleavages in vivo yield mature proteins. The precursor is processed into GP1 and GP2 by host cell furin in the trans Golgi, and maybe by other host proteases, to yield the mature GP1 and GP2 proteins. The cleavage site corresponds to the furin optimal cleavage sequence [KR]-X-[KR]-R. This cleavage does not seem to be required for function. After the internalization of the virus into cell endosomes, GP1 C-terminus is removed by the endosomal proteases cathepsin B, cathepsin L, or both, leaving a 19-kDa N-terminal fragment which is further digested by cathepsin B. Proteolytic processing of GP1,2 by host ADAM17 can remove the transmembrane anchor of GP2 and leads to shedding of complexes consisting in GP1 and truncated GP2 (GP1,2delta).

Its subcellular location is the virion membrane. It is found in the host cell membrane. It localises to the secreted. Functionally, trimeric GP1,2 complexes form the virion surface spikes and mediate the viral entry processes, with GP1 acting as the receptor-binding subunit and GP2 as the membrane fusion subunit. At later times of infection, down-regulates the expression of various host cell surface molecules that are essential for immune surveillance and cell adhesion. Down-modulates several integrins including ITGA1, ITGA2, ITGA3, ITGA4, ITGA5, ITGA6, ITGAV and ITGB1. This decrease in cell adhesion molecules may lead to cell detachment, contributing to the disruption of blood vessel integrity and hemorrhages developed during infection (cytotoxicity). Interacts with host TLR4 and thereby stimulates the differentiation and activation of monocytes leading to bystander death of T-lymphocytes. Down-regulates as well the function of host natural killer cells. Counteracts the antiviral effect of host BST2/tetherin that restricts release of progeny virions from infected cells. However, cooperates with VP40 and host BST2 to activate canonical NF-kappa-B pathway in a manner dependent on neddylation. Its function is as follows. Functions as a decoy for anti-GP1,2 antibodies thereby contributing to viral immune evasion. Interacts and activates host macrophages and dendritic cells inducing up-regulation of cytokine transcription. This effect is mediated throught activation of host TLR4. Responsible for binding to the receptor(s) on target cells. Interacts with CD209/DC-SIGN and CLEC4M/DC-SIGNR which act as cofactors for virus entry into dendritic cells (DCs) and endothelial cells. Binding to the macrophage specific lectin CLEC10A also seem to enhance virus infectivity. Interaction with FOLR1/folate receptor alpha may be a cofactor for virus entry in some cell types, although results are contradictory. Members of the Tyro3 receptor tyrosine kinase family also seem to be cell entry factors in filovirus infection. Once attached, the virions are internalized through clathrin-dependent endocytosis and/or macropinocytosis. After internalization of the virus into the endosomes of the host cell, proteolysis of GP1 by two cysteine proteases, CTSB/cathepsin B and CTSL/cathepsin L removes the glycan cap and allows GP1 binding to the host entry receptor NPC1. NPC1-binding, Ca(2+) and acidic pH induce a conformational change of GP2, which unmasks its fusion peptide and permit membranes fusion. In terms of biological role, acts as a class I viral fusion protein. Under the current model, the protein has at least 3 conformational states: pre-fusion native state, pre-hairpin intermediate state, and post-fusion hairpin state. During viral and target cell membrane fusion, the coiled coil regions (heptad repeats) assume a trimer-of-hairpins structure, positioning the fusion peptide in close proximity to the C-terminal region of the ectodomain. The formation of this structure appears to drive apposition and subsequent fusion of viral and target cell membranes. Responsible for penetration of the virus into the cell cytoplasm by mediating the fusion of the membrane of the endocytosed virus particle with the endosomal membrane. Low pH in endosomes induces an irreversible conformational change in GP2, releasing the fusion hydrophobic peptide. This chain is Envelope glycoprotein (GP), found in Epomops franqueti (Franquet's epauletted fruit bat).